The chain runs to 225 residues: Urease accessory protein UreG (225 aa).

25 to 32 (GPVGAGKT) contributes to the GTP binding site.

Belongs to the SIMIBI class G3E GTPase family. UreG subfamily. Homodimer. UreD, UreF and UreG form a complex that acts as a GTP-hydrolysis-dependent molecular chaperone, activating the urease apoprotein by helping to assemble the nickel containing metallocenter of UreC. The UreE protein probably delivers the nickel.

The protein localises to the cytoplasm. Facilitates the functional incorporation of the urease nickel metallocenter. This process requires GTP hydrolysis, probably effectuated by UreG. This is Urease accessory protein UreG from Haemophilus influenzae (strain ATCC 51907 / DSM 11121 / KW20 / Rd).